Consider the following 310-residue polypeptide: N-acetyl-gamma-glutamyl-phosphate reductase (310 aa).

C117 is an active-site residue.

It belongs to the NAGSA dehydrogenase family. Type 2 subfamily.

It is found in the cytoplasm. It carries out the reaction N-acetyl-L-glutamate 5-semialdehyde + phosphate + NADP(+) = N-acetyl-L-glutamyl 5-phosphate + NADPH + H(+). It participates in amino-acid biosynthesis; L-arginine biosynthesis; N(2)-acetyl-L-ornithine from L-glutamate: step 3/4. Its function is as follows. Catalyzes the NADPH-dependent reduction of N-acetyl-5-glutamyl phosphate to yield N-acetyl-L-glutamate 5-semialdehyde. The polypeptide is N-acetyl-gamma-glutamyl-phosphate reductase (Brucella suis (strain ATCC 23445 / NCTC 10510)).